Reading from the N-terminus, the 761-residue chain is 1,2-alpha-glucosylglycerol phosphorylase (761 aa).

327 to 328 (YQ) contacts glycerol. 333–334 (WD) contributes to the substrate binding site. Glutamate 475 acts as the Proton donor in catalysis. Substrate is bound at residue 587–588 (KQ).

It belongs to the glycosyl hydrolase 65 family. Homodimer.

The catalysed reaction is 2-O-(alpha-D-glucopyranosyl)glycerol + phosphate = beta-D-glucose 1-phosphate + glycerol. In terms of biological role, catalyzes both the (1) reversible phosphorolysis of 2-O-alpha-D-glucopyranosyl-sn-glycerol (GG) from beta-D-glucose 1-phosphate (betaGlc1P) and glycerol and (2) the hydrolysis of betaGlc1P. the betaGlc1P hydrolysis is a glucosyl-transfer reaction to an acceptor water molecule that produces an anomer-inverted alpha-glucose, not a phosphatase-type reaction. In the absence of glycerol produces alpha-D-glucopyranose and phosphate from beta-D-glucopyranose 1-phosphate. This is 1,2-alpha-glucosylglycerol phosphorylase from Bacillus selenitireducens (strain ATCC 700615 / DSM 15326 / MLS10).